The sequence spans 465 residues: Cysteine--tRNA ligase (465 aa).

Zn(2+) is bound at residue cysteine 27. The short motif at 29–39 (PTVYDDAHLGH) is the 'HIGH' region element. 3 residues coordinate Zn(2+): cysteine 207, histidine 237, and glutamate 241. Positions 269 to 273 (KMSKS) match the 'KMSKS' region motif. Position 272 (lysine 272) interacts with ATP.

The protein belongs to the class-I aminoacyl-tRNA synthetase family. Monomer. It depends on Zn(2+) as a cofactor.

Its subcellular location is the cytoplasm. The enzyme catalyses tRNA(Cys) + L-cysteine + ATP = L-cysteinyl-tRNA(Cys) + AMP + diphosphate. In Nitratiruptor sp. (strain SB155-2), this protein is Cysteine--tRNA ligase.